The primary structure comprises 565 residues: Dihydroxy-acid dehydratase (565 aa).

Position 80 (Asp80) interacts with Mg(2+). Position 121 (Cys121) interacts with [2Fe-2S] cluster. Mg(2+) contacts are provided by Asp122 and Lys123. Position 123 is an N6-carboxylysine (Lys123). Cys194 contacts [2Fe-2S] cluster. Mg(2+) is bound at residue Glu447. Ser473 (proton acceptor) is an active-site residue.

The protein belongs to the IlvD/Edd family. As to quaternary structure, homodimer. The cofactor is [2Fe-2S] cluster. Mg(2+) serves as cofactor.

The enzyme catalyses (2R)-2,3-dihydroxy-3-methylbutanoate = 3-methyl-2-oxobutanoate + H2O. It catalyses the reaction (2R,3R)-2,3-dihydroxy-3-methylpentanoate = (S)-3-methyl-2-oxopentanoate + H2O. The protein operates within amino-acid biosynthesis; L-isoleucine biosynthesis; L-isoleucine from 2-oxobutanoate: step 3/4. It functions in the pathway amino-acid biosynthesis; L-valine biosynthesis; L-valine from pyruvate: step 3/4. Functionally, functions in the biosynthesis of branched-chain amino acids. Catalyzes the dehydration of (2R,3R)-2,3-dihydroxy-3-methylpentanoate (2,3-dihydroxy-3-methylvalerate) into 2-oxo-3-methylpentanoate (2-oxo-3-methylvalerate) and of (2R)-2,3-dihydroxy-3-methylbutanoate (2,3-dihydroxyisovalerate) into 2-oxo-3-methylbutanoate (2-oxoisovalerate), the penultimate precursor to L-isoleucine and L-valine, respectively. The protein is Dihydroxy-acid dehydratase of Pelodictyon phaeoclathratiforme (strain DSM 5477 / BU-1).